Consider the following 354-residue polypeptide: Ion-translocating oxidoreductase complex subunit D (354 aa).

3 helical membrane passes run isoleucine 9–phenylalanine 28, leucine 67–valine 87, and valine 117–glycine 137. An FMN phosphoryl threonine modification is found at threonine 165. Helical transmembrane passes span glycine 200–leucine 220, isoleucine 222–alanine 242, valine 249–isoleucine 269, proline 277–isoleucine 297, and glycine 301–isoleucine 321.

It belongs to the NqrB/RnfD family. As to quaternary structure, the complex is composed of six subunits: RnfA, RnfB, RnfC, RnfD, RnfE and RnfG. FMN is required as a cofactor.

Its subcellular location is the cell inner membrane. Functionally, part of a membrane-bound complex that couples electron transfer with translocation of ions across the membrane. The protein is Ion-translocating oxidoreductase complex subunit D of Stutzerimonas stutzeri (Pseudomonas stutzeri).